The sequence spans 290 residues: Undecaprenyl-diphosphatase (290 aa).

The next 6 membrane-spanning stretches (helical) occupy residues 39 to 59, 85 to 105, 118 to 138, 202 to 222, 230 to 250, and 261 to 281; these read PGAA…LIYF, AQMG…GITL, LIAT…RLAA, SFLL…KDVG, PTIF…AWFM, and FVIY…AGVL.

The protein belongs to the UppP family.

It localises to the cell membrane. The enzyme catalyses di-trans,octa-cis-undecaprenyl diphosphate + H2O = di-trans,octa-cis-undecaprenyl phosphate + phosphate + H(+). Functionally, catalyzes the dephosphorylation of undecaprenyl diphosphate (UPP). Confers resistance to bacitracin. This chain is Undecaprenyl-diphosphatase, found in Streptomyces griseus subsp. griseus (strain JCM 4626 / CBS 651.72 / NBRC 13350 / KCC S-0626 / ISP 5235).